Here is a 240-residue protein sequence, read N- to C-terminus: Adenosylcobinamide-GDP ribazoletransferase (240 aa).

The next 5 membrane-spanning stretches (helical) occupy residues 31 to 51, 62 to 81, 109 to 129, 133 to 153, and 179 to 199; these read LLYYPLVGLLFGLLLWLASHL, ALLLTLWVLLSGALHLDGLA, IAVVTLVLVLLLKFCALWVLV, IGAQLLLAPLIGRAAMLGLFL, and VLLVCVLFCLFLGGWSVLLAL.

The protein belongs to the CobS family. It depends on Mg(2+) as a cofactor.

It localises to the cell inner membrane. The catalysed reaction is alpha-ribazole + adenosylcob(III)inamide-GDP = adenosylcob(III)alamin + GMP + H(+). It catalyses the reaction alpha-ribazole 5'-phosphate + adenosylcob(III)inamide-GDP = adenosylcob(III)alamin 5'-phosphate + GMP + H(+). Its pathway is cofactor biosynthesis; adenosylcobalamin biosynthesis; adenosylcobalamin from cob(II)yrinate a,c-diamide: step 7/7. Functionally, joins adenosylcobinamide-GDP and alpha-ribazole to generate adenosylcobalamin (Ado-cobalamin). Also synthesizes adenosylcobalamin 5'-phosphate from adenosylcobinamide-GDP and alpha-ribazole 5'-phosphate. The polypeptide is Adenosylcobinamide-GDP ribazoletransferase (Pseudomonas putida (strain ATCC 700007 / DSM 6899 / JCM 31910 / BCRC 17059 / LMG 24140 / F1)).